The sequence spans 263 residues: MNKHASLIHPTAVIAPSATLAPDVQIGAFTLIGNDVQIDTGTIIGSHCTIHGPTRIGRNNRFIGQAAIGGEPQDKKFAGERTELLIGDNNTIREFVTINRGTGGGGGVTSIGNDNWILAYTHIAHDCHVGHHCVFSNNASLAGHVTVGDWVIFSGFSGAHQFCRIGRYAFIGMGTLINGDVPPFTLIGSDTLGRPRGINNEGLKRRNFTPERITAIKRAYRTLYVAGLPLAEAKQQLAEQAKDNDDIKELLQFIETAQRPLLR.

This sequence belongs to the transferase hexapeptide repeat family. LpxA subfamily. Homotrimer.

The protein localises to the cytoplasm. It catalyses the reaction a (3R)-hydroxyacyl-[ACP] + UDP-N-acetyl-alpha-D-glucosamine = a UDP-3-O-[(3R)-3-hydroxyacyl]-N-acetyl-alpha-D-glucosamine + holo-[ACP]. The protein operates within glycolipid biosynthesis; lipid IV(A) biosynthesis; lipid IV(A) from (3R)-3-hydroxytetradecanoyl-[acyl-carrier-protein] and UDP-N-acetyl-alpha-D-glucosamine: step 1/6. Its function is as follows. Involved in the biosynthesis of lipid A, a phosphorylated glycolipid that anchors the lipopolysaccharide to the outer membrane of the cell. The chain is Acyl-[acyl-carrier-protein]--UDP-N-acetylglucosamine O-acyltransferase from Xylella fastidiosa (strain Temecula1 / ATCC 700964).